The sequence spans 1129 residues: Phytochrome A type 3 (1129 aa).

Over residues 1–21 the composition is skewed to low complexity; that stretch reads MSSSRPASSSSSRNRQSSQAR. The disordered stretch occupies residues 1–24; sequence MSSSRPASSSSSRNRQSSQARVLA. The GAF domain maps to 217-402; the sequence is SMEVLCNTVV…VFAVHVNREF (186 aa). Cysteine 322 contacts phytochromobilin. PAS domains lie at 618-688 and 748-822; these read VTSE…LQGK and VEGD…VSLC. The Histidine kinase domain occupies 902–1122; it reads YMRHAINNPL…TFIITAELAS (221 aa).

It belongs to the phytochrome family. As to quaternary structure, homodimer. Post-translationally, contains one covalently linked phytochromobilin chromophore.

Its function is as follows. Regulatory photoreceptor which exists in two forms that are reversibly interconvertible by light: the Pr form that absorbs maximally in the red region of the spectrum and the Pfr form that absorbs maximally in the far-red region. Photoconversion of Pr to Pfr induces an array of morphogenic responses, whereas reconversion of Pfr to Pr cancels the induction of those responses. Pfr controls the expression of a number of nuclear genes including those encoding the small subunit of ribulose-bisphosphate carboxylase, chlorophyll A/B binding protein, protochlorophyllide reductase, rRNA, etc. It also controls the expression of its own gene(s) in a negative feedback fashion. The sequence is that of Phytochrome A type 3 (PHYA3) from Avena sativa (Oat).